Here is a 53-residue protein sequence, read N- to C-terminus: Conotoxin Cal9.2f (53 aa).

Residues 1–6 (KKGVTL) constitute a propeptide that is removed on maturation. Disulfide bonds link cysteine 15-cysteine 32, cysteine 20-cysteine 42, and cysteine 22-cysteine 47.

As to expression, expressed by the venom duct.

The protein resides in the secreted. Functionally, probable neurotoxin with unknown target. Possibly targets ion channels. This chain is Conotoxin Cal9.2f, found in Californiconus californicus (California cone).